Here is a 497-residue protein sequence, read N- to C-terminus: MSFLLALDQGTSSSRSIVFDIEGRPVAMAQRELRQIYPQPGWVEHDPIEIRDSQLATAREAIARAGISAHDIRAVGITNQRETTLLWNRRTGAPLHNAIVWQDRRTEPICAALRERGAEALVRQRTGLLIDPYFSGTKLQWLLDHVPGAREQAARGELAFGTVDAWLVWQLTGGRVHATDVTNASRTLLFDVHANRWDDELLSLLDVPHELLPAVFPSSHLYGETDAGLLGAALPIAGIAGDQQSALFGQACFKPGLAKNTYGTGCFLLMHNGDRFQSSANGLVTTAAAQTGPQPQFAIEGSVFVGGAVVQWLRDGLRAIDSASAVQALAQSVPDSGGVVFVPAFTGLGAPYWKPDARGAIVGLSRGTTLGHIARAALESIAYQSAALLAAMGRDAQACGGAAVTELRVDGGACVNDLLMQFQADLLGVPVVRPQVIETTARGAAFLAGLSTGVYRGLDELEALWQPERTFHPTLPPGRASELMAQWEHAVRQTVAS.

Residue threonine 11 participates in ADP binding. 3 residues coordinate ATP: threonine 11, serine 12, and serine 13. Residue threonine 11 coordinates sn-glycerol 3-phosphate. Arginine 15 serves as a coordination point for ADP. Positions 81, 82, 133, and 242 each coordinate sn-glycerol 3-phosphate. The glycerol site is built by arginine 81, glutamate 82, tyrosine 133, aspartate 242, and glutamine 243. Positions 264 and 307 each coordinate ADP. ATP is bound by residues threonine 264, glycine 307, glutamine 311, and glycine 412. Residues glycine 412 and asparagine 416 each contribute to the ADP site.

The protein belongs to the FGGY kinase family.

It catalyses the reaction glycerol + ATP = sn-glycerol 3-phosphate + ADP + H(+). Its pathway is polyol metabolism; glycerol degradation via glycerol kinase pathway; sn-glycerol 3-phosphate from glycerol: step 1/1. With respect to regulation, inhibited by fructose 1,6-bisphosphate (FBP). Functionally, key enzyme in the regulation of glycerol uptake and metabolism. Catalyzes the phosphorylation of glycerol to yield sn-glycerol 3-phosphate. In Leptothrix cholodnii (strain ATCC 51168 / LMG 8142 / SP-6) (Leptothrix discophora (strain SP-6)), this protein is Glycerol kinase.